The chain runs to 87 residues: U3-theraphotoxin-Hhn1c (87 aa).

The N-terminal stretch at 1-24 (MVNMKASMFLTFAGLVLLFVVCHA) is a signal peptide. Positions 25–52 (SESEEKEFPKEMLSSIFAVDDDFKQEER) are excised as a propeptide. Intrachain disulfides connect cysteine 54-cysteine 67, cysteine 61-cysteine 72, and cysteine 66-cysteine 79.

The protein belongs to the neurotoxin 10 (Hwtx-1) family. 51 (Hntx-8) subfamily. Hntx-8 sub-subfamily. As to expression, expressed by the venom gland.

The protein resides in the secreted. Functionally, ion channel inhibitor. The sequence is that of U3-theraphotoxin-Hhn1c from Cyriopagopus hainanus (Chinese bird spider).